A 507-amino-acid polypeptide reads, in one-letter code: MAVAAAAMIGLPQAYLEGKEVKETSSLVTELCRHFYTQGWVSGTGGSITMKVHDASIPKPEQLIVMSPSGVQKERMQPEDMYILSANGSIISTPSPKPYPNKPPKCTDCAPLFMKAYEMRNAGAVIHSHGMESCLVTMLNPQAKEFRITHMEMIKGIQGHGYYDELVVPIIENTAYENELTDSLTKAIEAYPKATAVLVRNHGVYIWGDSWIHAKTQAECYHYLFDAAIKLHQLGLDAATPDHGPIRRTIHSQIKDSQYEREWPRRWIVLDIEGTTTPITFVTDVLFPYARENVGKHLNLTYHTAETQEDIKLLRAQVEEDLREGVTGAVPIPHADEGKEKVIAAMVSNVEAMIRADRKITALKELQGHIWRTGFECDELKAIVFEDVADALEKWHSSGIKVYIYSSGSRLAQKLLFGNTDYGDLRKYISGFFDTTIGNKKESRSYKEIKETLGVDDPAEIMFVTDVYQEAVAAKAAGLEAIISIRPGNAPLPENHGFKTVTSFSQI.

Alanine 2 carries the post-translational modification N-acetylalanine. The interval 2–237 (AVAAAAMIGL…AIKLHQLGLD (236 aa)) is methylthioribulose-1-phosphate dehydratase. A substrate-binding site is contributed by cysteine 109. 2 residues coordinate Zn(2+): histidine 127 and histidine 129. Catalysis depends on glutamate 152, which acts as the Proton donor/acceptor. Histidine 202 lines the Zn(2+) pocket. The tract at residues 268-507 (IVLDIEGTTT…FKTVTSFSQI (240 aa)) is enolase-phosphatase E1. Residues aspartate 271 and glutamate 273 each coordinate Mg(2+). Residues 406–407 (SS) and lysine 440 each bind substrate. Aspartate 466 provides a ligand contact to Mg(2+).

The protein in the N-terminal section; belongs to the aldolase class II family. MtnB subfamily. In the C-terminal section; belongs to the HAD-like hydrolase superfamily. MasA/MtnC family. Zn(2+) serves as cofactor. The cofactor is Mg(2+).

It carries out the reaction 5-(methylsulfanyl)-D-ribulose 1-phosphate = 5-methylsulfanyl-2,3-dioxopentyl phosphate + H2O. It catalyses the reaction 5-methylsulfanyl-2,3-dioxopentyl phosphate + H2O = 1,2-dihydroxy-5-(methylsulfanyl)pent-1-en-3-one + phosphate. It functions in the pathway amino-acid biosynthesis; L-methionine biosynthesis via salvage pathway; L-methionine from S-methyl-5-thio-alpha-D-ribose 1-phosphate: step 2/6. The protein operates within amino-acid biosynthesis; L-methionine biosynthesis via salvage pathway; L-methionine from S-methyl-5-thio-alpha-D-ribose 1-phosphate: step 3/6. Its pathway is amino-acid biosynthesis; L-methionine biosynthesis via salvage pathway; L-methionine from S-methyl-5-thio-alpha-D-ribose 1-phosphate: step 4/6. The sequence is that of Probable bifunctional methylthioribulose-1-phosphate dehydratase/enolase-phosphatase E1 from Arabidopsis thaliana (Mouse-ear cress).